The chain runs to 182 residues: Bis(5'-nucleosyl)-tetraphosphatase [asymmetrical] (182 aa).

Residues 3–110 (KQLYFSKFPV…IPRKKADFSE (108 aa)) enclose the HIT domain. Residues asparagine 28, glutamine 84, and 90–93 (GQTV) each bind substrate. A Histidine triad motif motif is present at residues 95-99 (HVHVH). Histidine 97 serves as the catalytic Tele-AMP-histidine intermediate. Histidine 99 provides a ligand contact to substrate. The disordered stretch occupies residues 135-161 (RYAGDERPPTSMRQAIPKDEDRKPRTL). Over residues 150-161 (IPKDEDRKPRTL) the composition is skewed to basic and acidic residues.

It catalyses the reaction P(1),P(4)-bis(5'-guanosyl) tetraphosphate + H2O = GMP + GTP + 2 H(+). Asymmetrically hydrolyzes Ap4A to yield AMP and ATP. This chain is Bis(5'-nucleosyl)-tetraphosphatase [asymmetrical] (aph1), found in Schizosaccharomyces pombe (strain 972 / ATCC 24843) (Fission yeast).